Consider the following 348-residue polypeptide: Protein arginine N-methyltransferase 1 (348 aa).

In terms of domain architecture, SAM-dependent MTase PRMT-type spans 20 to 322 (EQHYFNSYDH…EKNNRDLNIK (303 aa)). Positions 33, 42, 66, 88, and 117 each coordinate S-adenosyl-L-methionine. Active-site residues include E132 and E141.

Belongs to the class I-like SAM-binding methyltransferase superfamily. Protein arginine N-methyltransferase family. Homodimer. The dimers can then associate to form a ring-shaped homohexamer. Interacts with NPL3, BRE5, MTR4, SNF2, SUM1, and SSD1.

The protein localises to the nucleus. It catalyses the reaction L-arginyl-[protein] + S-adenosyl-L-methionine = N(omega)-methyl-L-arginyl-[protein] + S-adenosyl-L-homocysteine + H(+). The catalysed reaction is L-arginyl-[protein] + 2 S-adenosyl-L-methionine = N(omega),N(omega)-dimethyl-L-arginyl-[protein] + 2 S-adenosyl-L-homocysteine + 2 H(+). In terms of biological role, S-adenosyl-L-methionine-dependent protein-arginine N-methyltransferase that catalyzes both the mono- and asymmetric (type I) dimethylation of the guanidino nitrogens of arginine residues in a variety of RNA-binding proteins such as heterogeneous nuclear ribonucleoproteins (hnRNPs) and small nuclear ribonucleoproteins (snRNPs). Methylates NAB2, NPL3, HRP1 and YRA1, shuttling hnRNPs involved in mRNA processing and export, facilitating their export out of the nucleus. Methylation of NPL3 weakens its interaction with THO2, a component of the TREX (transcription/export) complex important for transcriptional elongation and recruitment of mRNA export factors. Methylates the hnRNP HRB1, but does not influence its subcellular location. Methylates the nucleolar proteins GAR1, NOP1 and NSR1. Methylates the snRNP SNP1 and modulates the cotranscriptional recruitment of splicing factors. Dimethylates free histone H4 (HHF1/HHF2) at 'Arg-4' (H4R3me2a) and plays a role in preservation and establishment of silent chromatin domains. Mono- and dimethylates ribosomal protein S2 (RPS2) at 'Arg-11'. Methylates the catalytic subunit of the SWI/SNF chromatin-remodeling complex SNF2. This is Protein arginine N-methyltransferase 1 from Saccharomyces cerevisiae (strain ATCC 204508 / S288c) (Baker's yeast).